Consider the following 269-residue polypeptide: Tryptophan synthase alpha chain (269 aa).

Residues E49 and D60 each act as proton acceptor in the active site.

Belongs to the TrpA family. As to quaternary structure, tetramer of two alpha and two beta chains.

The enzyme catalyses (1S,2R)-1-C-(indol-3-yl)glycerol 3-phosphate + L-serine = D-glyceraldehyde 3-phosphate + L-tryptophan + H2O. It participates in amino-acid biosynthesis; L-tryptophan biosynthesis; L-tryptophan from chorismate: step 5/5. The alpha subunit is responsible for the aldol cleavage of indoleglycerol phosphate to indole and glyceraldehyde 3-phosphate. This chain is Tryptophan synthase alpha chain, found in Histophilus somni (strain 2336) (Haemophilus somnus).